Reading from the N-terminus, the 400-residue chain is Acetyl-CoA decarbonylase/synthase complex subunit delta (400 aa).

This sequence belongs to the CdhD family. Heterodimer of delta and gamma chains. The ACDS complex is made up of alpha, epsilon, beta, gamma and delta chains with a probable stoichiometry of (alpha(2)epsilon(2))(4)-beta(8)-(gamma(1)delta(1))(8).

Part of a complex that catalyzes the reversible cleavage of acetyl-CoA, allowing autotrophic growth from CO(2). Probably maintains the overall quaternary structure of the ACDS complex. The protein is Acetyl-CoA decarbonylase/synthase complex subunit delta of Methanopyrus kandleri (strain AV19 / DSM 6324 / JCM 9639 / NBRC 100938).